Here is a 111-residue protein sequence, read N- to C-terminus: uncharacterized protein (111 aa).

This is an uncharacterized protein from Microplitis demolitor bracovirus (isolate Webb) (MdBV).